Consider the following 138-residue polypeptide: uncharacterized protein (138 aa).

The next 2 helical transmembrane spans lie at 1-21 (MEIGYIFILAGFLVIALEAIV) and 46-66 (YAFISAIIAGVLTIIILHKFV).

Its subcellular location is the cell membrane. This is an uncharacterized protein from Methanocaldococcus jannaschii (strain ATCC 43067 / DSM 2661 / JAL-1 / JCM 10045 / NBRC 100440) (Methanococcus jannaschii).